The following is a 60-amino-acid chain: Histidine-rich metal-binding polypeptide (60 aa).

Residues 1–60 (MAHHEEQHGGHHHHHHHTHHHHYHGGEHHHHHHSSHHEEGCCSTSDSHHQEEGCCHGHHE) form a disordered region. Positions 10–35 (GHHHHHHHTHHHHYHGGEHHHHHHSS) are enriched in basic residues. Over residues 36–60 (HHEEGCCSTSDSHHQEEGCCHGHHE) the composition is skewed to basic and acidic residues. A run of 2 repeats spans residues 38 to 42 (EEGCC) and 51 to 55 (EEGCC). A 2 X 5 AA repeats of E-E-G-C-C region spans residues 38–55 (EEGCCSTSDSHHQEEGCC).

Functionally, strongly binds nickel and zinc. Binds other metals less strongly: cobalt &gt; copper &gt; cadmium &gt; manganese. May act to increase, or at least to preserve, urease activity. Exact function is still unknown. The polypeptide is Histidine-rich metal-binding polypeptide (hpn) (Helicobacter pylori (strain J99 / ATCC 700824) (Campylobacter pylori J99)).